We begin with the raw amino-acid sequence, 481 residues long: 3-isopropylmalate dehydratase large subunit (481 aa).

[4Fe-4S] cluster-binding residues include cysteine 363, cysteine 423, and cysteine 426. Positions 432–459 (DQLKPGERSASTSNRNFEGRQGPGGRTH) are disordered.

The protein belongs to the aconitase/IPM isomerase family. LeuC type 1 subfamily. As to quaternary structure, heterodimer of LeuC and LeuD. Requires [4Fe-4S] cluster as cofactor.

The catalysed reaction is (2R,3S)-3-isopropylmalate = (2S)-2-isopropylmalate. Its pathway is amino-acid biosynthesis; L-leucine biosynthesis; L-leucine from 3-methyl-2-oxobutanoate: step 2/4. Catalyzes the isomerization between 2-isopropylmalate and 3-isopropylmalate, via the formation of 2-isopropylmaleate. The protein is 3-isopropylmalate dehydratase large subunit of Corynebacterium glutamicum (strain ATCC 13032 / DSM 20300 / JCM 1318 / BCRC 11384 / CCUG 27702 / LMG 3730 / NBRC 12168 / NCIMB 10025 / NRRL B-2784 / 534).